Here is a 310-residue protein sequence, read N- to C-terminus: Apolipoprotein E (310 aa).

The first 18 residues, 1-18 (MKVLWAALVVTLLAGCQA), serve as a signal peptide directing secretion. Tandem repeats lie at residues 77–98 (ALME…QQLG), 99–120 (PTAQ…ARLG), 121–142 (ADME…AMMG), and 143–164 (QSTE…KRLL). Residues 77–248 (ALMEETMKEV…RLDEVREQVQ (172 aa)) are 8 X 22 AA approximate tandem repeats. M140 carries the post-translational modification Methionine sulfoxide. S144 carries the post-translational modification Phosphoserine. The segment at 155 to 165 (HLRKLRKRLLR) is LDL and other lipoprotein receptors binding. A heparin-binding site is contributed by 159-162 (LRKR). The segment at residues 165 to 186 (RDAEDLQKRLAVYQAGIREGAE) is a repeat. 3 repeat units span residues 187 to 204 (RSVN…EQAA), 205 to 226 (TVRS…QRLR), and 227 to 248 (GRLE…EQVQ). Residues 203–283 (AATVRSLISK…SWFEPLVQDM (81 aa)) are lipid-binding and lipoprotein association. Position 222–229 (222–229 (GQRLRGRL)) interacts with heparin. Positions 259–310 (NQMRLQAEAFHARLKSWFEPLVQDMQQKWAELVEKVQLAVGTSPTSESSEKQ) are homooligomerization. The specificity for association with VLDL stretch occupies residues 271 to 283 (RLKSWFEPLVQDM).

Belongs to the apolipoprotein A1/A4/E family. In terms of assembly, homotetramer. May interact with ABCA1; functionally associated with ABCA1 in the biogenesis of HDLs. May interact with APP/A4 amyloid-beta peptide; the interaction is extremely stable in vitro but its physiological significance is unclear. May interact with MAPT. May interact with MAP2. In the cerebrospinal fluid, interacts with secreted SORL1. Interacts with PMEL; this allows the loading of PMEL luminal fragment on ILVs to induce fibril nucleation. Post-translationally, APOE exists as multiple glycosylated and sialylated glycoforms within cells and in plasma. The extent of glycosylation and sialylation are tissue and context specific. In terms of processing, glycated in plasma VLDL. Phosphorylated by FAM20C in the extracellular medium.

The protein resides in the secreted. It localises to the extracellular space. The protein localises to the extracellular matrix. It is found in the extracellular vesicle. Its subcellular location is the endosome. The protein resides in the multivesicular body. In terms of biological role, APOE is an apolipoprotein, a protein associating with lipid particles, that mainly functions in lipoprotein-mediated lipid transport between organs via the plasma and interstitial fluids. APOE is a core component of plasma lipoproteins and is involved in their production, conversion and clearance. Apolipoproteins are amphipathic molecules that interact both with lipids of the lipoprotein particle core and the aqueous environment of the plasma. As such, APOE associates with chylomicrons, chylomicron remnants, very low density lipoproteins (VLDL) and intermediate density lipoproteins (IDL) but shows a preferential binding to high-density lipoproteins (HDL). It also binds a wide range of cellular receptors including the LDL receptor/LDLR, the LDL receptor-related proteins LRP1, LRP2 and LRP8 and the very low-density lipoprotein receptor/VLDLR that mediate the cellular uptake of the APOE-containing lipoprotein particles. Finally, APOE also has a heparin-binding activity and binds heparan-sulfate proteoglycans on the surface of cells, a property that supports the capture and the receptor-mediated uptake of APOE-containing lipoproteins by cells. A main function of APOE is to mediate lipoprotein clearance through the uptake of chylomicrons, VLDLs, and HDLs by hepatocytes. APOE is also involved in the biosynthesis by the liver of VLDLs as well as their uptake by peripheral tissues ensuring the delivery of triglycerides and energy storage in muscle, heart and adipose tissues. By participating in the lipoprotein-mediated distribution of lipids among tissues, APOE plays a critical role in plasma and tissues lipid homeostasis. APOE is also involved in two steps of reverse cholesterol transport, the HDLs-mediated transport of cholesterol from peripheral tissues to the liver, and thereby plays an important role in cholesterol homeostasis. First, it is functionally associated with ABCA1 in the biogenesis of HDLs in tissues. Second, it is enriched in circulating HDLs and mediates their uptake by hepatocytes. APOE also plays an important role in lipid transport in the central nervous system, regulating neuron survival and sprouting. The chain is Apolipoprotein E (APOE) from Tapirus terrestris (Lowland tapir).